The following is a 507-amino-acid chain: Histidine ammonia-lyase (507 aa).

The 5-imidazolinone (Ala-Gly) cross-link spans 141 to 143; it reads ASG. Serine 142 bears the 2,3-didehydroalanine (Ser) mark.

Belongs to the PAL/histidase family. Post-translationally, contains an active site 4-methylidene-imidazol-5-one (MIO), which is formed autocatalytically by cyclization and dehydration of residues Ala-Ser-Gly.

It is found in the cytoplasm. The catalysed reaction is L-histidine = trans-urocanate + NH4(+). It functions in the pathway amino-acid degradation; L-histidine degradation into L-glutamate; N-formimidoyl-L-glutamate from L-histidine: step 1/3. The polypeptide is Histidine ammonia-lyase (Burkholderia pseudomallei (strain 1106a)).